Reading from the N-terminus, the 378-residue chain is Putative F-box/kelch-repeat protein At3g43710 (378 aa).

One can recognise an F-box domain in the interval 23-69; it reads TFGIEMLPDDLVLSCLARVPRMYYPILSLVSKRFRSFLTSTELYQTR. Kelch repeat units follow at residues 130 to 176, 178 to 227, and 262 to 308; these read NIYV…VLDG, IYVA…GYDG, and SQCV…VPTK.

This is Putative F-box/kelch-repeat protein At3g43710 from Arabidopsis thaliana (Mouse-ear cress).